The chain runs to 281 residues: 2-C-methyl-D-erythritol 4-phosphate cytidylyltransferase (281 aa).

It belongs to the IspD/TarI cytidylyltransferase family. IspD subfamily.

It catalyses the reaction 2-C-methyl-D-erythritol 4-phosphate + CTP + H(+) = 4-CDP-2-C-methyl-D-erythritol + diphosphate. It participates in isoprenoid biosynthesis; isopentenyl diphosphate biosynthesis via DXP pathway; isopentenyl diphosphate from 1-deoxy-D-xylulose 5-phosphate: step 2/6. In terms of biological role, catalyzes the formation of 4-diphosphocytidyl-2-C-methyl-D-erythritol from CTP and 2-C-methyl-D-erythritol 4-phosphate (MEP). In Psychrobacter arcticus (strain DSM 17307 / VKM B-2377 / 273-4), this protein is 2-C-methyl-D-erythritol 4-phosphate cytidylyltransferase.